The chain runs to 68 residues: Lantibiotic mersacidin (68 aa).

A disordered region spans residues 1–28 (MSQEAIIRSWKDPFSRENSTQNPAGNPF). Residues 1–48 (MSQEAIIRSWKDPFSRENSTQNPAGNPFSELKEAQMDKLVGAGDMEAA) constitute a propeptide that is removed on maturation. A cross-link (beta-methyllanthionine (Cys-Thr)) is located at residues 49 to 50 (CT). 2 cross-links (beta-methyllanthionine (Thr-Cys)) span residues 52–60 (TLPGGGGVC) and 61–66 (TLTSEC). A cross-link (S-(2-aminovinyl)-3-methyl-D-cysteine (Thr-Cys)) is located at residues 63–68 (TSECIC). S64 bears the 2,3-didehydroalanine (Ser) mark.

It belongs to the type B lantibiotic family. In terms of processing, maturation of lantibiotics involves the enzymatic conversion of Thr, and Ser into dehydrated AA and the formation of thioether bonds with cysteine. The carboxy-terminal beta-methyllanthionine undergoes decarboxylation. This is followed by membrane translocation and cleavage of the modified precursor.

In terms of biological role, kills a number of Gram-positive bacteria. Acts at the level of cell wall biosynthesis by interfering with bacterial peptidoglycan biosynthesis. Specifically inhibits the conversion of the lipid II intermediate into polymeric nascent glycan strands by transglycosylation. May interact with the peptidoglycan precursor rather than with the enzyme. The sequence is that of Lantibiotic mersacidin (mrsA) from Bacillus sp. (strain HIL-Y85/54728).